A 319-amino-acid polypeptide reads, in one-letter code: Beta-ketoacyl-[acyl-carrier-protein] synthase III (319 aa).

Catalysis depends on residues Cys-113 and His-246. Residues 247–251 (QANLR) are ACP-binding. Asn-276 is a catalytic residue.

The protein belongs to the thiolase-like superfamily. FabH family. As to quaternary structure, homodimer.

Its subcellular location is the cytoplasm. It carries out the reaction malonyl-[ACP] + acetyl-CoA + H(+) = 3-oxobutanoyl-[ACP] + CO2 + CoA. It participates in lipid metabolism; fatty acid biosynthesis. In terms of biological role, catalyzes the condensation reaction of fatty acid synthesis by the addition to an acyl acceptor of two carbons from malonyl-ACP. Catalyzes the first condensation reaction which initiates fatty acid synthesis and may therefore play a role in governing the total rate of fatty acid production. Possesses both acetoacetyl-ACP synthase and acetyl transacylase activities. Its substrate specificity determines the biosynthesis of branched-chain and/or straight-chain of fatty acids. The chain is Beta-ketoacyl-[acyl-carrier-protein] synthase III from Chromobacterium violaceum (strain ATCC 12472 / DSM 30191 / JCM 1249 / CCUG 213 / NBRC 12614 / NCIMB 9131 / NCTC 9757 / MK).